We begin with the raw amino-acid sequence, 1148 residues long: Minor outer capsid protein P2 (1148 aa).

The PPPDE domain occupies glutamate 929 to leucine 1148. Active-site residues include histidine 953 and cysteine 1111.

The protein belongs to the phytoreovirus minor outer capsid protein P2 family. In terms of assembly, interacts with host ent-kaurene oxidases OSKO1, OSKO2, OSKOL4 and OSKOL5; this interaction.

The protein localises to the virion. It localises to the host cytoplasm. Its function is as follows. Minor capsid protein present in the outer capsid, which is required for adsorption of the virus onto host insect cells (Potential). Could play a role in the host plant virus induced dwarfism. The polypeptide is Minor outer capsid protein P2 (Rice dwarf virus (isolate O) (RDV)).